The primary structure comprises 355 residues: Ataxin-3 (355 aa).

Residue M1 forms a Peptide (Met-Gly) (interchain with G-Cter in ubiquitin) linkage. Residues 1-180 (MESIFHEKQE…DCEADQLLQM (180 aa)) form the Josephin domain. C14 acts as the Nucleophile in catalysis. H119 acts as the Proton acceptor in catalysis. N134 is an active-site residue. A Glycyl lysine isopeptide (Lys-Gly) (interchain with G-Cter in ubiquitin) cross-link involves residue K200. S219 is subject to Phosphoserine. UIM domains lie at 224 to 243 (EDED…IDME) and 244 to 263 (DEEA…SSRS). A compositionally biased stretch (polar residues) spans 257–275 (MQGSSRSMCENSPQTSSPD). A disordered region spans residues 257 to 355 (MQGSSRSMCE…KDNLKAERKK (99 aa)). Residues S268, S272, and S273 each carry the phosphoserine modification. Over residues 279–289 (EELRRRREAYF) the composition is skewed to basic and acidic residues. The residue at position 321 (S321) is a Phosphoserine. The UIM 3 domain occupies 329–348 (SEEDMLRAAVTMSLETAKDN). Over residues 344 to 355 (TAKDNLKAERKK) the composition is skewed to basic and acidic residues.

In terms of assembly, interacts with STUB1/CHIP (when monoubiquitinated). Interacts with DNA repair proteins RAD23A and RAD23B. Interacts with BECN1 (via its poly-Gln domain). Interacts with PRKN, UBR2, VCP and tubulin. Monoubiquitinated by UBE2W, possibly leading to activate the deubiquitinating enzyme activity.

It localises to the nucleus matrix. The protein localises to the nucleus. It is found in the lysosome membrane. The catalysed reaction is Thiol-dependent hydrolysis of ester, thioester, amide, peptide and isopeptide bonds formed by the C-terminal Gly of ubiquitin (a 76-residue protein attached to proteins as an intracellular targeting signal).. Deubiquitinating enzyme involved in protein homeostasis maintenance, transcription, cytoskeleton regulation, myogenesis and degradation of misfolded chaperone substrates. Binds long polyubiquitin chains and trims them, while it has weak or no activity against chains of 4 or less ubiquitins. Involved in degradation of misfolded chaperone substrates via its interaction with STUB1/CHIP: recruited to monoubiquitinated STUB1/CHIP, and restricts the length of ubiquitin chain attached to STUB1/CHIP substrates and preventing further chain extension. Interacts with key regulators of transcription and represses transcription: acts as a histone-binding protein that regulates transcription. Acts as a negative regulator of mTORC1 signaling in response to amino acid deprivation by mediating deubiquitination of RHEB, thereby promoting RHEB inactivation by the TSC-TBC complex. Regulates autophagy via the deubiquitination of 'Lys-402' of BECN1 leading to the stabilization of BECN1. The chain is Ataxin-3 (Atxn3) from Mus musculus (Mouse).